The following is a 127-amino-acid chain: MSELRFTEDHEWLRVEADGSVTVGITAYAQNALGDVVFVQLPELQQYEKGNEASTVESVKAASGVYMPLTGEVVEVNGQLEDSPELVNEDPMGEGWFFRFIPADAEAVTALLDQDAYDRLLKANDDA.

The Lipoyl-binding domain occupies 20 to 101 (SVTVGITAYA…MGEGWFFRFI (82 aa)). At Lys60 the chain carries N6-lipoyllysine.

It belongs to the GcvH family. In terms of assembly, the glycine cleavage system is composed of four proteins: P, T, L and H. Requires (R)-lipoate as cofactor.

The glycine cleavage system catalyzes the degradation of glycine. The H protein shuttles the methylamine group of glycine from the P protein to the T protein. The sequence is that of Glycine cleavage system H protein 1 from Pseudomonas putida (strain ATCC 47054 / DSM 6125 / CFBP 8728 / NCIMB 11950 / KT2440).